A 319-amino-acid polypeptide reads, in one-letter code: Acetyl-coenzyme A carboxylase carboxyl transferase subunit alpha (319 aa).

The CoA carboxyltransferase C-terminal domain maps to 35–296 (DLDKEIEQLE…KATLLRQLED (262 aa)).

This sequence belongs to the AccA family. As to quaternary structure, acetyl-CoA carboxylase is a heterohexamer composed of biotin carboxyl carrier protein (AccB), biotin carboxylase (AccC) and two subunits each of ACCase subunit alpha (AccA) and ACCase subunit beta (AccD).

It is found in the cytoplasm. It catalyses the reaction N(6)-carboxybiotinyl-L-lysyl-[protein] + acetyl-CoA = N(6)-biotinyl-L-lysyl-[protein] + malonyl-CoA. It functions in the pathway lipid metabolism; malonyl-CoA biosynthesis; malonyl-CoA from acetyl-CoA: step 1/1. Its function is as follows. Component of the acetyl coenzyme A carboxylase (ACC) complex. First, biotin carboxylase catalyzes the carboxylation of biotin on its carrier protein (BCCP) and then the CO(2) group is transferred by the carboxyltransferase to acetyl-CoA to form malonyl-CoA. This is Acetyl-coenzyme A carboxylase carboxyl transferase subunit alpha from Vibrio parahaemolyticus serotype O3:K6 (strain RIMD 2210633).